The primary structure comprises 68 residues: DNA-directed RNA polymerase subunit omega (68 aa).

Belongs to the RNA polymerase subunit omega family. As to quaternary structure, the RNAP catalytic core consists of 2 alpha, 1 beta, 1 beta' and 1 omega subunit. When a sigma factor is associated with the core the holoenzyme is formed, which can initiate transcription.

The enzyme catalyses RNA(n) + a ribonucleoside 5'-triphosphate = RNA(n+1) + diphosphate. Functionally, promotes RNA polymerase assembly. Latches the N- and C-terminal regions of the beta' subunit thereby facilitating its interaction with the beta and alpha subunits. The protein is DNA-directed RNA polymerase subunit omega of Trichlorobacter lovleyi (strain ATCC BAA-1151 / DSM 17278 / SZ) (Geobacter lovleyi).